Here is a 524-residue protein sequence, read N- to C-terminus: Rho guanine nucleotide exchange factor 3 (524 aa).

Residues 75–98 (SDSRPDLFSPRPWSRNTPAANTKR) are disordered. Residues 121-303 (IKRQEAIFEL…IQGIVAEINI (183 aa)) form the DH domain. A PH domain is found at 290 to 448 (AINIIQGIVA…QWLNCIRQAK (159 aa)).

It is found in the cytoplasm. In terms of biological role, acts as a guanine nucleotide exchange factor (GEF) for RhoA and RhoB GTPases. The protein is Rho guanine nucleotide exchange factor 3 (Arhgef3) of Gallus gallus (Chicken).